The sequence spans 1424 residues: DNA-directed RNA polymerase subunit beta' (1424 aa).

Positions 60, 62, 75, and 78 each coordinate Zn(2+). 3 residues coordinate Mg(2+): Asp449, Asp451, and Asp453. Cys783, Cys857, Cys864, and Cys867 together coordinate Zn(2+).

It belongs to the RNA polymerase beta' chain family. The RNAP catalytic core consists of 2 alpha, 1 beta, 1 beta' and 1 omega subunit. When a sigma factor is associated with the core the holoenzyme is formed, which can initiate transcription. Mg(2+) serves as cofactor. Requires Zn(2+) as cofactor.

The catalysed reaction is RNA(n) + a ribonucleoside 5'-triphosphate = RNA(n+1) + diphosphate. In terms of biological role, DNA-dependent RNA polymerase catalyzes the transcription of DNA into RNA using the four ribonucleoside triphosphates as substrates. The protein is DNA-directed RNA polymerase subunit beta' of Treponema denticola (strain ATCC 35405 / DSM 14222 / CIP 103919 / JCM 8153 / KCTC 15104).